The sequence spans 245 residues: Probable phosphatase NT01EI_1577 (245 aa).

Residues His7, His9, His15, His40, Glu73, His101, His131, Asp192, and His194 each coordinate Zn(2+).

The protein belongs to the PHP family. In terms of assembly, homotrimer. Requires Zn(2+) as cofactor.

This Edwardsiella ictaluri (strain 93-146) protein is Probable phosphatase NT01EI_1577.